Here is a 472-residue protein sequence, read N- to C-terminus: UDP-N-acetylmuramate--L-alanine ligase (472 aa).

An ATP-binding site is contributed by 122–128 (GTHGKTT).

This sequence belongs to the MurCDEF family.

The protein resides in the cytoplasm. The catalysed reaction is UDP-N-acetyl-alpha-D-muramate + L-alanine + ATP = UDP-N-acetyl-alpha-D-muramoyl-L-alanine + ADP + phosphate + H(+). Its pathway is cell wall biogenesis; peptidoglycan biosynthesis. Functionally, cell wall formation. This chain is UDP-N-acetylmuramate--L-alanine ligase, found in Thermobifida fusca (strain YX).